Consider the following 267-residue polypeptide: Ribosomal RNA small subunit methyltransferase A (267 aa).

N18, L20, G45, E66, D91, and N112 together coordinate S-adenosyl-L-methionine.

It belongs to the class I-like SAM-binding methyltransferase superfamily. rRNA adenine N(6)-methyltransferase family. RsmA subfamily.

The protein resides in the cytoplasm. The catalysed reaction is adenosine(1518)/adenosine(1519) in 16S rRNA + 4 S-adenosyl-L-methionine = N(6)-dimethyladenosine(1518)/N(6)-dimethyladenosine(1519) in 16S rRNA + 4 S-adenosyl-L-homocysteine + 4 H(+). Specifically dimethylates two adjacent adenosines (A1518 and A1519) in the loop of a conserved hairpin near the 3'-end of 16S rRNA in the 30S particle. May play a critical role in biogenesis of 30S subunits. The protein is Ribosomal RNA small subunit methyltransferase A of Shewanella woodyi (strain ATCC 51908 / MS32).